The primary structure comprises 544 residues: Chaperonin GroEL (544 aa).

ATP is bound by residues 30–33, lysine 51, 87–91, glycine 415, 481–483, and aspartate 497; these read TLGP, DGTTT, and DAL.

Belongs to the chaperonin (HSP60) family. Forms a cylinder of 14 subunits composed of two heptameric rings stacked back-to-back. Interacts with the co-chaperonin GroES.

It localises to the cytoplasm. It carries out the reaction ATP + H2O + a folded polypeptide = ADP + phosphate + an unfolded polypeptide.. Its function is as follows. Together with its co-chaperonin GroES, plays an essential role in assisting protein folding. The GroEL-GroES system forms a nano-cage that allows encapsulation of the non-native substrate proteins and provides a physical environment optimized to promote and accelerate protein folding. The chain is Chaperonin GroEL from Chlamydia trachomatis serovar D (strain ATCC VR-885 / DSM 19411 / UW-3/Cx).